Here is a 354-residue protein sequence, read N- to C-terminus: DNA-binding protein EMBP-1 (354 aa).

Disordered stretches follow at residues 1 to 24 (MASS…TPAQ), 106 to 193 (SAAG…RSAS), and 230 to 273 (EVNA…RKQQ). Low complexity-rich tracts occupy residues 127 to 140 (SSSG…QGSS) and 232 to 245 (NAAA…SLSQ). Over residues 246–265 (MDERELKRERRKQSNRESAR) the composition is skewed to basic and acidic residues. The bZIP domain occupies 250 to 313 (ELKRERRKQS…KTMETENKKL (64 aa)). A basic motif region spans residues 252 to 271 (KRERRKQSNRESARRSRLRK). The leucine-zipper stretch occupies residues 278–299 (LAQKVSELTAANGTLRSELDQL).

Belongs to the bZIP family. As to quaternary structure, heterodimer.

Its subcellular location is the nucleus. Its function is as follows. Interacts specifically with the 8-bp sequence 5'-CACGTGGC-3'in the abscisic acid response element (ABARE). Also binds to the hexamer motif 5'-ACGTCA-3' of histone gene promoters. In Triticum aestivum (Wheat), this protein is DNA-binding protein EMBP-1.